A 144-amino-acid chain; its full sequence is Large ribosomal subunit protein uL15 (144 aa).

A disordered region spans residues 1–52 (MRLNTLSPAEGAKHSAKRLGRGIGSGLGKTGGRGHKGQKSRTGSGVRRGFEG). The segment covering 21 to 31 (RGIGSGLGKTG) has biased composition (gly residues).

The protein belongs to the universal ribosomal protein uL15 family. In terms of assembly, part of the 50S ribosomal subunit.

In terms of biological role, binds to the 23S rRNA. The protein is Large ribosomal subunit protein uL15 of Haemophilus influenzae (strain 86-028NP).